Reading from the N-terminus, the 353-residue chain is Photosystem II D2 protein (353 aa).

Thr2 carries the N-acetylthreonine modification. Thr2 bears the Phosphothreonine mark. Residues 41 to 61 (CAYFALGGWFTGTTFVTSWYT) form a helical membrane-spanning segment. His118 contacts chlorophyll a. Residues 125–141 (GFMLRQFELARSVQLRP) form a helical membrane-spanning segment. Pheophytin a-binding residues include Gln130 and Asn143. A helical transmembrane segment spans residues 153-166 (VFVSVFLIYPLGQS). His198 is a binding site for chlorophyll a. A helical membrane pass occupies residues 208 to 228 (AALLCAIHGATVENTLFEDGD). Residues His215 and Phe262 each contribute to the a plastoquinone site. Position 215 (His215) interacts with Fe cation. His269 provides a ligand contact to Fe cation. Residues 279-295 (GLWMSALGVVGLALNLR) form a helical membrane-spanning segment.

It belongs to the reaction center PufL/M/PsbA/D family. PSII is composed of 1 copy each of membrane proteins PsbA, PsbB, PsbC, PsbD, PsbE, PsbF, PsbH, PsbI, PsbJ, PsbK, PsbL, PsbM, PsbT, PsbX, PsbY, PsbZ, Psb30/Ycf12, at least 3 peripheral proteins of the oxygen-evolving complex and a large number of cofactors. It forms dimeric complexes. The D1/D2 heterodimer binds P680, chlorophylls that are the primary electron donor of PSII, and subsequent electron acceptors. It shares a non-heme iron and each subunit binds pheophytin, quinone, additional chlorophylls, carotenoids and lipids. There is also a Cl(-1) ion associated with D1 and D2, which is required for oxygen evolution. The PSII complex binds additional chlorophylls, carotenoids and specific lipids. serves as cofactor.

Its subcellular location is the plastid. It localises to the chloroplast thylakoid membrane. It carries out the reaction 2 a plastoquinone + 4 hnu + 2 H2O = 2 a plastoquinol + O2. In terms of biological role, photosystem II (PSII) is a light-driven water:plastoquinone oxidoreductase that uses light energy to abstract electrons from H(2)O, generating O(2) and a proton gradient subsequently used for ATP formation. It consists of a core antenna complex that captures photons, and an electron transfer chain that converts photonic excitation into a charge separation. The D1/D2 (PsbA/PsbD) reaction center heterodimer binds P680, the primary electron donor of PSII as well as several subsequent electron acceptors. D2 is needed for assembly of a stable PSII complex. The chain is Photosystem II D2 protein from Platanus occidentalis (Sycamore).